The following is a 290-amino-acid chain: Protease HtpX (290 aa).

The next 2 membrane-spanning stretches (helical) occupy residues 4 to 24 and 36 to 56; these read IMLFLATNLAVLIIASITLKL and GSLLIFCAVFGFAGSLVSLFI. Histidine 142 lines the Zn(2+) pocket. Glutamate 143 is an active-site residue. Zn(2+) is bound at residue histidine 146. The next 2 membrane-spanning stretches (helical) occupy residues 150–170 and 193–213; these read GDMVTLALIQGVVNTFVMFFA and FIATIFAELVLGILASIIVMW. Glutamate 219 lines the Zn(2+) pocket.

It belongs to the peptidase M48B family. Requires Zn(2+) as cofactor.

The protein resides in the cell inner membrane. This chain is Protease HtpX, found in Ectopseudomonas mendocina (strain ymp) (Pseudomonas mendocina).